A 409-amino-acid chain; its full sequence is LIM/homeobox protein ttx-3 (409 aa).

2 LIM zinc-binding domains span residues 108–169 and 171–232; these read NQCC…RYQK and CRKC…VRST. Disordered regions lie at residues 245–299 and 372–409; these read AVVA…RTSF and MNPP…YTHL. Residues 247 to 267 are compositionally biased toward pro residues; it reads VAPPPPPPTTTTAPPPAAPEQ. Residues 292-351 constitute a DNA-binding region (homeobox); sequence SKRMRTSFKHHQLRAMKTYFALNHNPDAKDLKQLAAKTNLTKRVLQVWFQNARAKYRREL. Polar residues predominate over residues 382–409; that stretch reads GHSTDGYQLNTPPLSSEIYSPNSNYTHL.

As to expression, expressed in the AIA, AIN and AIY interneurons, and in the NSM neurons. Expressed also in ADL and ASI sensory neurons in 60-70% of L2 larvae. Expression is also detected in head muscles of embryos and some early larvae but not late larvae or adults.

Its subcellular location is the nucleus. It is found in the perikaryon. The protein localises to the cell projection. It localises to the axon. Functionally, transcription factor. Binds to a sequence motif, 5'-TTATTGGCTTCGTTAA-3', which may be involved in AIY interneuron function, in the regulatory elements of target genes; binding is more efficient, in vitro, together with homeobox protein ceh-10. Required for specification of the AIA and AIY interneurons and the NSM neurons. Positively regulates the expression of a number of genes including ceh-10, ceh-23, kal-1, hen-1, ser-2, unc-17 and sra-11 in AIY neurons, and cat-4, flp-4, bas-1, ptps-1 and mgl-1 in NSM neurons. In concert with WNT/beta-catenin signaling, initiates expression of homeobox ceh-10 in AIY, but not in the sister cells, SMDD motor neurons. Also acts in an autoregulatory feedback loop to maintain its own expression. Plays a role in the thermotactic response, olfactory imprinting, regulation of longevity, control of dauer formation and axon outgrowth and pathfinding. Not required for normal chemosensory behavior. The protein is LIM/homeobox protein ttx-3 of Caenorhabditis elegans.